We begin with the raw amino-acid sequence, 819 residues long: MSNIQNMSLEDIMGERFGRYSKYIIQERALPDIRDGLKPVQRRILYSMNKDGNTFEKGYRKSAKSVGNIMGNFHPHGDSSIYDAMVRMSQDWKNREILVEMHGNNGSMDGDPPAAMRYTEARLSEIAGYLLQDIEKNTVSFAWNFDDTEKEPTVLPAAFPNLLVNGSSGISAGYATDIPPHNLSEVIDAVVYMIDHPKASLEKLMEFLPGPDFPTGGIIQGADEIKKAYETGKGRVVVRSRTEIEELKGGKQQIIVTEIPYEVNKAVLVKKIDDVRVNNKVPGIVEVRDESDRTGLRIAIELKKEADSQTILNYLLKYTDLQVNYNFNMVAIDHFTPRQVGLQKILSSYISHRKDIIIERSKFDKAKAEKRLHIVEGLIRVLSILDEIIALIRSSDNKADAKENLKVSYDFSEEQAEAIVTLQLYRLTNTDIVTLQNEENDLRDLITTLSAIIGDEATMYNVMKRELREVKKKFANPRLSELQAESQIIEIDTASLIAEEETFVSVTRGGYLKRTSPRSFNASSLEEVGKRDDDELIFVKQAKTTEHLLLFTTLGNVIYRPIHELTDLRWKDIGEHLSQTISNFATEEEILYADIVTSFDQGLYVAVTQNGFIKRFDRKELSPWRTYKSKSTKYVKLKDDKDRVVTLSPVIMEDLLLVTKNGYALRFSSQEVPIQGLKSAGVKGINLKNDDSLASAFAVTSNSFFVLTQRGSLKRMAVDDIPQTSRANRGLLVLRELKTKPHRVFLAGGVQSDTSAEQFDLFTDIPEEETNQQMLEVISKTGQTYEIALETLSLSERISNGSFISDTISDQEVLVARTR.

Positions 30–496 constitute a Topo IIA-type catalytic domain; sequence LPDIRDGLKP…QIIEIDTASL (467 aa). Y118 serves as the catalytic O-(5'-phospho-DNA)-tyrosine intermediate.

Belongs to the type II topoisomerase GyrA/ParC subunit family. ParC type 2 subfamily. In terms of assembly, heterotetramer composed of ParC and ParE.

The protein localises to the cell membrane. The enzyme catalyses ATP-dependent breakage, passage and rejoining of double-stranded DNA.. Topoisomerase IV is essential for chromosome segregation. It relaxes supercoiled DNA. Performs the decatenation events required during the replication of a circular DNA molecule. This is DNA topoisomerase 4 subunit A from Streptococcus pyogenes serotype M1.